A 1215-amino-acid chain; its full sequence is Homeodomain-interacting protein kinase 3 (1215 aa).

Residue lysine 27 forms a Glycyl lysine isopeptide (Lys-Gly) (interchain with G-Cter in SUMO2) linkage. One can recognise a Protein kinase domain in the interval 197-525 (YEVLDFLGRG…PAETLNHPFV (329 aa)). ATP is bound by residues 203–211 (LGRGTFGQV) and lysine 226. Aspartate 322 (proton acceptor) is an active-site residue. Position 359 is a phosphotyrosine (tyrosine 359). The interval 767–944 (QNRGILVKLM…NSMSDEEQES (178 aa)) is interaction with AR. An interaction with FAS region spans residues 796-891 (NTNIPHSAFI…SQRHSLRECK (96 aa)). A required for localization to nuclear speckles region spans residues 855-1011 (QTIIIADSPS…ENGLNADEHM (157 aa)). Residues 866–918 (AVSVITISSDTDEEETSQRHSLRECKGSLDCEACQSTLNIDRMCSLSSPDSTL) are SUMO interaction motifs (SIM); required for nuclear localization and kinase activity. The segment at 870-880 (ITISSDTDEEE) is interaction with UBL1. Residues 912–929 (SSPDSTLSTSSSGQSSPS) show a composition bias toward low complexity. Residues 912–987 (SSPDSTLSTS…ELVSSADTET (76 aa)) are disordered. Residues 945 to 957 (SCDTVDGSPTSDS) are compositionally biased toward polar residues. Lysine 1208 participates in a covalent cross-link: Glycyl lysine isopeptide (Lys-Gly) (interchain with G-Cter in SUMO).

It belongs to the protein kinase superfamily. CMGC Ser/Thr protein kinase family. HIPK subfamily. Interacts with Nkx1-2. Interacts with FAS and DAXX. Probably part of a complex consisting of HIPK3, FAS and FADD. Interacts with and stabilizes ligand-bound androgen receptor (AR). Interacts with UBL1/SUMO-1. Binds to NR5A1/SF1, SPEN/MINT and RUNX2. Autophosphorylated, but autophosphorylation is not required for catalytic activity. Post-translationally, may be sumoylated. Overexpressed in multidrug resistant cells. Highly expressed in heart and skeletal muscle, and at lower levels in placenta, pancreas, brain, spleen, prostate, thymus, testis, small intestine, colon and leukocytes. Not found in liver and lung.

The protein localises to the cytoplasm. The protein resides in the nucleus. The catalysed reaction is L-seryl-[protein] + ATP = O-phospho-L-seryl-[protein] + ADP + H(+). It carries out the reaction L-threonyl-[protein] + ATP = O-phospho-L-threonyl-[protein] + ADP + H(+). Functionally, serine/threonine-protein kinase involved in transcription regulation, apoptosis and steroidogenic gene expression. Phosphorylates JUN and RUNX2. Seems to negatively regulate apoptosis by promoting FADD phosphorylation. Enhances androgen receptor-mediated transcription. May act as a transcriptional corepressor for NK homeodomain transcription factors. The phosphorylation of NR5A1 activates SF1 leading to increased steroidogenic gene expression upon cAMP signaling pathway stimulation. In osteoblasts, supports transcription activation: phosphorylates RUNX2 that synergizes with SPEN/MINT to enhance FGFR2-mediated activation of the osteocalcin FGF-responsive element (OCFRE). The protein is Homeodomain-interacting protein kinase 3 (HIPK3) of Homo sapiens (Human).